The sequence spans 243 residues: Biosynthetic peptidoglycan transglycosylase (243 aa).

A helical membrane pass occupies residues 21-43 (LLIVSLVSALMSVLQVIVFRFVD).

The protein belongs to the glycosyltransferase 51 family.

Its subcellular location is the cell inner membrane. It catalyses the reaction [GlcNAc-(1-&gt;4)-Mur2Ac(oyl-L-Ala-gamma-D-Glu-L-Lys-D-Ala-D-Ala)](n)-di-trans,octa-cis-undecaprenyl diphosphate + beta-D-GlcNAc-(1-&gt;4)-Mur2Ac(oyl-L-Ala-gamma-D-Glu-L-Lys-D-Ala-D-Ala)-di-trans,octa-cis-undecaprenyl diphosphate = [GlcNAc-(1-&gt;4)-Mur2Ac(oyl-L-Ala-gamma-D-Glu-L-Lys-D-Ala-D-Ala)](n+1)-di-trans,octa-cis-undecaprenyl diphosphate + di-trans,octa-cis-undecaprenyl diphosphate + H(+). It functions in the pathway cell wall biogenesis; peptidoglycan biosynthesis. Its function is as follows. Peptidoglycan polymerase that catalyzes glycan chain elongation from lipid-linked precursors. The polypeptide is Biosynthetic peptidoglycan transglycosylase (Xylella fastidiosa (strain M12)).